A 475-amino-acid polypeptide reads, in one-letter code: Ribulose bisphosphate carboxylase large chain (475 aa).

Residues 1 to 2 (MS) constitute a propeptide that is removed on maturation. The residue at position 3 (Pro-3) is an N-acetylproline. At Lys-14 the chain carries N6,N6,N6-trimethyllysine. Positions 123 and 173 each coordinate substrate. Lys-175 acts as the Proton acceptor in catalysis. Lys-177 contributes to the substrate binding site. Mg(2+)-binding residues include Lys-201, Asp-203, and Glu-204. Lys-201 carries the N6-carboxylysine modification. His-294 serves as the catalytic Proton acceptor. Arg-295, His-327, and Ser-379 together coordinate substrate.

Belongs to the RuBisCO large chain family. Type I subfamily. In terms of assembly, heterohexadecamer of 8 large chains and 8 small chains; disulfide-linked. The disulfide link is formed within the large subunit homodimers. It depends on Mg(2+) as a cofactor. Post-translationally, the disulfide bond which can form in the large chain dimeric partners within the hexadecamer appears to be associated with oxidative stress and protein turnover.

The protein resides in the plastid. Its subcellular location is the chloroplast. It catalyses the reaction 2 (2R)-3-phosphoglycerate + 2 H(+) = D-ribulose 1,5-bisphosphate + CO2 + H2O. It carries out the reaction D-ribulose 1,5-bisphosphate + O2 = 2-phosphoglycolate + (2R)-3-phosphoglycerate + 2 H(+). In terms of biological role, ruBisCO catalyzes two reactions: the carboxylation of D-ribulose 1,5-bisphosphate, the primary event in carbon dioxide fixation, as well as the oxidative fragmentation of the pentose substrate in the photorespiration process. Both reactions occur simultaneously and in competition at the same active site. In Chlorokybus atmophyticus (Soil alga), this protein is Ribulose bisphosphate carboxylase large chain.